The chain runs to 93 residues: Small ribosomal subunit protein uS19 (93 aa).

This sequence belongs to the universal ribosomal protein uS19 family.

Its function is as follows. Protein S19 forms a complex with S13 that binds strongly to the 16S ribosomal RNA. In Leifsonia xyli subsp. xyli (strain CTCB07), this protein is Small ribosomal subunit protein uS19.